Reading from the N-terminus, the 205-residue chain is Protein PYRAB00100 (205 aa).

Positions 7–201 (EWGEFLVRLA…EEYPRGPVRR (195 aa)) constitute an AMMECR1 domain.

The protein is Protein PYRAB00100 of Pyrococcus abyssi (strain GE5 / Orsay).